Consider the following 83-residue polypeptide: U5-theraphotoxin-Hs1a 4 (83 aa).

A signal peptide spans 1-21; sequence MKTSMFLTLTGLVLLFVDCYA. The propeptide occupies 22 to 49; the sequence is SESEEKEFPKELLSSIFAADSDFKVEER. Disulfide bonds link cysteine 51/cysteine 63, cysteine 56/cysteine 68, and cysteine 62/cysteine 75.

This sequence belongs to the neurotoxin 10 (Hwtx-1) family. 51 (Hntx-8) subfamily. Hntx-8 sub-subfamily. As to expression, expressed by the venom gland.

Its subcellular location is the secreted. Agglutinates erythrocytes. In Cyriopagopus schmidti (Chinese bird spider), this protein is U5-theraphotoxin-Hs1a 4.